A 561-amino-acid chain; its full sequence is Arginine--tRNA ligase (561 aa).

Positions A135–N145 match the 'HIGH' region motif.

This sequence belongs to the class-I aminoacyl-tRNA synthetase family. In terms of assembly, monomer.

It is found in the cytoplasm. The catalysed reaction is tRNA(Arg) + L-arginine + ATP = L-arginyl-tRNA(Arg) + AMP + diphosphate. In Desulfitobacterium hafniense (strain DSM 10664 / DCB-2), this protein is Arginine--tRNA ligase.